Consider the following 457-residue polypeptide: Adenylosuccinate synthetase isozyme 2 B (457 aa).

Residues 40-46 (GDEGKGK) and 68-70 (GHT) contribute to the GTP site. D41 serves as the catalytic Proton acceptor. Mg(2+)-binding residues include D41 and G68. D41 contacts substrate. Residues 41-44 (DEGK), 66-69 (NAGH), T163, R177, N256, T271, and R335 each bind IMP. Catalysis depends on H69, which acts as the Proton donor. 331-337 (VTTGRKR) lines the substrate pocket. GTP is bound by residues R337, 363-365 (KLD), and 445-448 (GVGK).

This sequence belongs to the adenylosuccinate synthetase family. In terms of assembly, homodimer. Mg(2+) is required as a cofactor.

It localises to the cytoplasm. Its subcellular location is the mitochondrion. The catalysed reaction is IMP + L-aspartate + GTP = N(6)-(1,2-dicarboxyethyl)-AMP + GDP + phosphate + 2 H(+). It functions in the pathway purine metabolism; AMP biosynthesis via de novo pathway; AMP from IMP: step 1/2. Its activity is regulated as follows. Inhibited competitively by AMP and IMP and non-competitively by fructose 1,6-bisphosphate. In terms of biological role, plays an important role in the de novo pathway and in the salvage pathway of purine nucleotide biosynthesis. Catalyzes the first committed step in the biosynthesis of AMP from IMP. The protein is Adenylosuccinate synthetase isozyme 2 B (adss2-b) of Xenopus tropicalis (Western clawed frog).